The chain runs to 816 residues: Phosphatidylinositol 4-kinase beta (816 aa).

3 disordered regions span residues 1–30 (MGDTVVEPAPLKPTSEPTSGPPGNNGGSLL), 101–120 (EDEMGATVASGTAKGARRRR), and 248–318 (AHRK…SFSS). N-acetylglycine is present on G2. The segment at 2–68 (GDTVVEPAPL…VKLLHGGMAV (67 aa)) is interaction with ACBD3. The PIK helical domain occupies 52–242 (CQDVLEKVKL…GTKLRKLILS (191 aa)). Position 258 is a phosphoserine (S258). Residue T263 is modified to Phosphothreonine. Phosphoserine occurs at positions 266, 275, 277, 284, and 294. 2 stretches are compositionally biased toward polar residues: residues 278–297 (DATASISLSSNLKRTASNPK) and 306–318 (SSSTESIDNSFSS). Position 428 is a phosphoserine (S428). T438 carries the phosphothreonine modification. S511 is subject to Phosphoserine. 2 positions are modified to phosphothreonine: T517 and T519. The region spanning 535 to 801 (EPWQEKVRRI…MVDGSMRSIT (267 aa)) is the PI3K/PI4K catalytic domain. Residues 541-547 (VRRIREG) form a G-loop region. A catalytic loop region spans residues 668–676 (QVKDRHNGN). The interval 687–711 (HIDFGFILSSSPRNLGFETSAFKLT) is activation loop.

It belongs to the PI3/PI4-kinase family. Type III PI4K subfamily. In terms of assembly, interacts with ARF1 and ARF3 in the Golgi complex, but not with ARF4, ARF5 or ARF6. Interacts with NCS1/FREQ in a calcium-independent manner. Interacts with CALN1/CABP8 and CALN2/CABP7; in a calcium-dependent manner; this interaction competes with NCS1/FREQ binding. Interacts with ACBD3. Interacts with ARMH3, YWHAB, YWHAE, YWHAG, YWHAH, YWHAQ, YWHAZ and SFN. Interacts with GGA2 (via VHS domain); the interaction is important for PI4KB location at the Golgi apparatus membrane. Interacts with ATG9A. Mg(2+) is required as a cofactor. It depends on Mn(2+) as a cofactor.

The protein localises to the endomembrane system. It localises to the mitochondrion outer membrane. Its subcellular location is the rough endoplasmic reticulum membrane. It is found in the golgi apparatus. The protein resides in the golgi apparatus membrane. It catalyses the reaction a 1,2-diacyl-sn-glycero-3-phospho-(1D-myo-inositol) + ATP = a 1,2-diacyl-sn-glycero-3-phospho-(1D-myo-inositol 4-phosphate) + ADP + H(+). Its activity is regulated as follows. Inhibited by wortmannin. Increased kinase activity upon interaction with NCS1/FREQ. Functionally, phosphorylates phosphatidylinositol (PI) in the first committed step in the production of the second messenger inositol-1,4,5,-trisphosphate (PIP). May regulate Golgi disintegration/reorganization during mitosis, possibly via its phosphorylation. Involved in Golgi-to-plasma membrane trafficking. The polypeptide is Phosphatidylinositol 4-kinase beta (PI4KB) (Plecturocebus moloch (Dusky titi monkey)).